The sequence spans 1133 residues: MAYPELDAADFLQQLARRKEFKSLISPPVDQKELIRDLRAHFVQIGGPGCEKGGRAFFPCDPYASPFPSIKGLQLHNAQLFVQNFQNPNTPYSRLLLNWQTGTGKSIAAIAIARQFMNHYMNFIENAPWIFVVGFTRAIIQTEMLRRPELGFVSYKEVAELHRLLHIAKQSGSTTSVESRHLNGFVSTLKRRLTDRNRGGFFQFYGYKEFASKLFNITSKGEEKNFDVLSLFHRSDEAEDTLNENDISQFVQKISEAETNGLIRVNQKIMEQLRGGLLIADEIHNVYNIQERNNYGIALQYVLDAFPPHQAPRAVFMSATPVTGSVMEYVDLLNLLVPRHELPNGQPLQRQQLFDSSGHSVKWKKDALALVERLSTGRVSFLLDTNTNFYPERIFAGKMLSYKDETLPYLHFIECPMSEYQLETLKQLGPDPKISSNAYSIYDMVFPNPKFSKQTEPKAYGLFNSTETPTALSMASTDWLLENGVQIIEPSRRAPFNVSGSFLSLQPPTHISGLAFYSGKYTQMMKDILSIIRQGRGKILIYHNRVRMSGVLILQEILQSNGILNEVSSPVGTTRCSICAAIRDEHTHSDHQFIPVRFTILHSEIEPAVRERSLALFNASSNLEGHQLRILIGSKVIVEGLNFQAVRYEMIMSLPLDIPRLIQVFGRVVRKNSHMELPPSERNVTIYLYVSTTPDGGPELAKYAQKLKEYILIQEGDKALRKHAIDGFTNQIKIDKPMLESLPLSPSITPANVGATVLNTFEAYGYGEQEVKTISNIIISLFMARPVWTYSELWKAVSTPKLIQGITIDNKLFSEDNFALALISLCYSKNQCKELWIQNRLCTIMHVPAKPEHLYVAAVLNHKKEPVLDIETYIRDFQLPAMHSIRITKYLEHSQTKEPFQVLYEKFQKDFQDEPMEQVLIHYPASFHYTMLEALIIDNLAGMGALVEVYKKFFIAFSKKDIQPFPDIFKIISHVPGDDNTLVGYATEDSVRLITSREDKTWHEIPLYMLNINVKRKENDIVIGYMESKGKALKFKIRPPIQVLKKNEITDIRMLNRGAVCETRGREEQQKIADQLGISLNLTKISAIKLCLLIRNNLLQKEMEARNQPNGMQDGIRWFYLFNDKMPSLVHTS.

Residues 52–352 (KGGRAFFPCD…PNGQPLQRQQ (301 aa)) form the Helicase ATP-binding domain. 99-106 (WQTGTGKS) contacts ATP. The short motif at 281–284 (DEIH) is the DEAH box element. The Helicase C-terminal domain occupies 524–724 (MMKDILSIIR…EGDKALRKHA (201 aa)).

Belongs to the DEAD box helicase family. DEAH subfamily.

The protein resides in the virion. It catalyses the reaction ATP + H2O = ADP + phosphate + H(+). Putative initation factor. The protein is Early transcription factor large subunit homolog of Ornithodoros (relapsing fever ticks).